The chain runs to 141 residues: Large-conductance mechanosensitive channel (141 aa).

3 consecutive transmembrane segments (helical) span residues 14–34, 38–58, and 81–101; these read VMDL…VKSL, IIMP…YFLG, and GSFI…FLMV.

Belongs to the MscL family. As to quaternary structure, homopentamer.

It localises to the cell inner membrane. In terms of biological role, channel that opens in response to stretch forces in the membrane lipid bilayer. May participate in the regulation of osmotic pressure changes within the cell. This is Large-conductance mechanosensitive channel from Rhizobium rhizogenes (strain K84 / ATCC BAA-868) (Agrobacterium radiobacter).